The primary structure comprises 85 residues: Homeobox protein liguleless 3 (85 aa).

The 21-residue stretch at 1-21 (ELKEMLLKKYSGCLSRLRSEF) folds into the ELK domain. Positions 22–85 (LKKRKKGKLP…NQRKRHWKPS (64 aa)) form a DNA-binding region, homeobox; TALE-type.

Belongs to the TALE/KNOX homeobox family.

The protein localises to the nucleus. Functionally, probably binds to the DNA sequence 5'-TGAC-3'. In Zea mays (Maize), this protein is Homeobox protein liguleless 3 (LG3).